The primary structure comprises 327 residues: ATPase ASNA1 homolog (327 aa).

26 to 33 (KGGVGKTT) provides a ligand contact to ATP. D57 is a catalytic residue. Residues E238 and N265 each contribute to the ATP site. Zn(2+) contacts are provided by C274 and C277.

Belongs to the arsA ATPase family. As to quaternary structure, homodimer.

It localises to the cytoplasm. The protein localises to the endoplasmic reticulum. In terms of biological role, ATPase required for the post-translational delivery of tail-anchored (TA) proteins to the endoplasmic reticulum. Recognizes and selectively binds the transmembrane domain of TA proteins in the cytosol. This complex then targets to the endoplasmic reticulum by membrane-bound receptors, where the tail-anchored protein is released for insertion. This process is regulated by ATP binding and hydrolysis. ATP binding drives the homodimer towards the closed dimer state, facilitating recognition of newly synthesized TA membrane proteins. ATP hydrolysis is required for insertion. Subsequently, the homodimer reverts towards the open dimer state, lowering its affinity for the membrane-bound receptor, and returning it to the cytosol to initiate a new round of targeting. The chain is ATPase ASNA1 homolog from Entamoeba histolytica (strain ATCC 30459 / HM-1:IMSS / ABRM).